Here is a 67-residue protein sequence, read N- to C-terminus: Large ribosomal subunit protein bL35 (67 aa).

This sequence belongs to the bacterial ribosomal protein bL35 family.

The sequence is that of Large ribosomal subunit protein bL35 from Allorhizobium ampelinum (strain ATCC BAA-846 / DSM 112012 / S4) (Agrobacterium vitis (strain S4)).